A 559-amino-acid polypeptide reads, in one-letter code: Formate--tetrahydrofolate ligase (559 aa).

68–75 (TPAGEGKT) contributes to the ATP binding site.

This sequence belongs to the formate--tetrahydrofolate ligase family.

It catalyses the reaction (6S)-5,6,7,8-tetrahydrofolate + formate + ATP = (6R)-10-formyltetrahydrofolate + ADP + phosphate. Its pathway is one-carbon metabolism; tetrahydrofolate interconversion. In Rhizobium johnstonii (strain DSM 114642 / LMG 32736 / 3841) (Rhizobium leguminosarum bv. viciae), this protein is Formate--tetrahydrofolate ligase.